A 361-amino-acid polypeptide reads, in one-letter code: sn-glycerol-3-phosphate import ATP-binding protein UgpC (361 aa).

Positions 4–235 constitute an ABC transporter domain; sequence LSLKGVRKSY…PATVFVAGFI (232 aa). ATP is bound at residue 37 to 44; sequence GPSGCGKS.

This sequence belongs to the ABC transporter superfamily. sn-glycerol-3-phosphate importer (TC 3.A.1.1.3) family. The complex is composed of two ATP-binding proteins (UgpC), two transmembrane proteins (UgpA and UgpE) and a solute-binding protein (UgpB).

The protein resides in the cell inner membrane. The catalysed reaction is sn-glycerol 3-phosphate(out) + ATP + H2O = sn-glycerol 3-phosphate(in) + ADP + phosphate + H(+). Its function is as follows. Part of the ABC transporter complex UgpBAEC involved in sn-glycerol-3-phosphate (G3P) import. Responsible for energy coupling to the transport system. This Burkholderia cenocepacia (strain HI2424) protein is sn-glycerol-3-phosphate import ATP-binding protein UgpC.